The primary structure comprises 370 residues: NADH-quinone oxidoreductase subunit D (370 aa).

It belongs to the complex I 49 kDa subunit family. In terms of assembly, NDH-1 is composed of 14 different subunits. Subunits NuoB, C, D, E, F, and G constitute the peripheral sector of the complex.

Its subcellular location is the cell membrane. It catalyses the reaction a quinone + NADH + 5 H(+)(in) = a quinol + NAD(+) + 4 H(+)(out). NDH-1 shuttles electrons from NADH, via FMN and iron-sulfur (Fe-S) centers, to quinones in the respiratory chain. The immediate electron acceptor for the enzyme in this species is believed to be a menaquinone. Couples the redox reaction to proton translocation (for every two electrons transferred, four hydrogen ions are translocated across the cytoplasmic membrane), and thus conserves the redox energy in a proton gradient. This is NADH-quinone oxidoreductase subunit D from Desulfitobacterium hafniense (strain Y51).